The sequence spans 108 residues: uncharacterized protein (108 aa).

A helical transmembrane segment spans residues 10–32 (LQAPYILCTSFITLKIHNFFFFF).

The protein resides in the membrane. This is an uncharacterized protein from Saccharomyces cerevisiae (strain ATCC 204508 / S288c) (Baker's yeast).